Reading from the N-terminus, the 175-residue chain is NADH-quinone oxidoreductase subunit I (175 aa).

2 consecutive 4Fe-4S ferredoxin-type domains span residues 64 to 93 and 110 to 139; these read KRDEQGRENCTACGLCAVSCPAEAITIIAD and SLYEINMLRCIFCGLCEEACPKDAVYLTEE. [4Fe-4S] cluster-binding residues include Cys73, Cys76, Cys79, Cys83, Cys119, Cys122, Cys125, and Cys129.

The protein belongs to the complex I 23 kDa subunit family. In terms of assembly, NDH-1 is composed of 14 different subunits. Subunits NuoA, H, J, K, L, M, N constitute the membrane sector of the complex. It depends on [4Fe-4S] cluster as a cofactor.

It localises to the cell inner membrane. The catalysed reaction is a quinone + NADH + 5 H(+)(in) = a quinol + NAD(+) + 4 H(+)(out). NDH-1 shuttles electrons from NADH, via FMN and iron-sulfur (Fe-S) centers, to quinones in the respiratory chain. The immediate electron acceptor for the enzyme in this species is believed to be ubiquinone. Couples the redox reaction to proton translocation (for every two electrons transferred, four hydrogen ions are translocated across the cytoplasmic membrane), and thus conserves the redox energy in a proton gradient. The chain is NADH-quinone oxidoreductase subunit I from Cytophaga hutchinsonii (strain ATCC 33406 / DSM 1761 / CIP 103989 / NBRC 15051 / NCIMB 9469 / D465).